The following is a 210-amino-acid chain: Scoloptoxin SSD976 (210 aa).

An N-terminal signal peptide occupies residues 1-23; it reads MNILLSSTLFVLLMFQIIGSGMG.

In terms of processing, contains 3 disulfide bonds. In terms of tissue distribution, expressed by the venom gland.

It localises to the secreted. Voltage-gated calcium channel inhibitor. The sequence is that of Scoloptoxin SSD976 from Scolopendra dehaani (Thai centipede).